The primary structure comprises 101 residues: Cysteine-rich PDZ-binding protein (101 aa).

It belongs to the CRIPT family. As to quaternary structure, component of the minor spliceosome, which splices U12-type introns.

The protein localises to the cytoplasm. In terms of biological role, as a component of the minor spliceosome, involved in the splicing of U12-type introns in pre-mRNAs. The polypeptide is Cysteine-rich PDZ-binding protein (CRIPT) (Gallus gallus (Chicken)).